Consider the following 150-residue polypeptide: Ribosome-binding factor A (150 aa).

Residues 126 to 150 are disordered; that stretch reads EVARDLSHDDDEDGGADEAPRNGDE.

Belongs to the RbfA family. As to quaternary structure, monomer. Binds 30S ribosomal subunits, but not 50S ribosomal subunits or 70S ribosomes.

It localises to the cytoplasm. In terms of biological role, one of several proteins that assist in the late maturation steps of the functional core of the 30S ribosomal subunit. Associates with free 30S ribosomal subunits (but not with 30S subunits that are part of 70S ribosomes or polysomes). Required for efficient processing of 16S rRNA. May interact with the 5'-terminal helix region of 16S rRNA. This chain is Ribosome-binding factor A, found in Brucella suis (strain ATCC 23445 / NCTC 10510).